A 567-amino-acid polypeptide reads, in one-letter code: Multidrug transporter TPO1_1 (567 aa).

A disordered region spans residues 1-71 (MVEEISPKYT…NRRMSRILTG (71 aa)). The N-linked (GlcNAc...) asparagine glycan is linked to Asn-120. Transmembrane regions (helical) follow at residues 128–148 (IICIVLCLNCICISMGSSIFA), 157–177 (IYHVIPVVAILGVTLYVFGFA), 194–214 (GVLVISAFGFAVFQFAVATSK), 224–244 (FFGGLIGAAPMAVVPAAFADM), 253–273 (AICLFSLGVFVGPILSPVMGS), 283–303 (WLEYVTGCFASALFVAVALTF), 358–378 (PLLLIITIYNSFVYGILYLML), 396–416 (ELPYIALIIGMLVCTAFLWYF), 436–456 (LIPMVYAGVIFPIGILWFCWT), 471–491 (AGSFIGFGLMGIFLPCLNYII), 498–520 (AASAVAANTFMRSAFGAVFPLFA), and 531–551 (WAGLLLGLFAAALIPVPLFFL).

The protein belongs to the major facilitator superfamily. DHA1 family. Polyamines/proton antiporter (TC 2.A.1.2.16) subfamily.

The protein resides in the cell membrane. Functionally, multidrug resistance transporter involved in resistance to azole antifungal drugs such as the imidazoles miconazole, ketoconazole, and tioconazole; as well as the triazoles itraconazole and fluconazole. Also plays a role in the resistance to other antifungal drug families such as the polyene amphotericin B, the pyrimide analog flucytosine, the fungicide mancozeb, and the polyamine spermine. Decreases the intracellular accumulation of clotrimazole by mediating its extrusion from cells. Involved in virulence by conferring resistance to the human antimicrobial peptide histatin-5. The sequence is that of Multidrug transporter TPO1_1 from Candida glabrata (strain ATCC 2001 / BCRC 20586 / JCM 3761 / NBRC 0622 / NRRL Y-65 / CBS 138) (Yeast).